A 180-amino-acid polypeptide reads, in one-letter code: F17 fimbrial protein (180 aa).

A signal peptide spans 1–21 (MQKIQFILGILAAASSSATLA). An intrachain disulfide couples Cys-37 to Cys-77.

Belongs to the fimbrial protein family.

It localises to the fimbrium. Its function is as follows. Fimbriae (also called pili), polar filaments radiating from the surface of the bacterium to a length of 0.5-1.5 micrometers and numbering 100-300 per cell, enable bacteria to colonize the epithelium of specific host organs. In Escherichia coli, this protein is F17 fimbrial protein (F17a-A).